An 814-amino-acid chain; its full sequence is Glycosyltransferase GlyD (814 aa).

A GT8 domain region spans residues 1–264 (MNKTIVLAGD…SQILQHHMGE (264 aa)). UDP-binding positions include 8-13 (AGDRNY) and 102-103 (DS). Residues D102, D104, and H226 each coordinate Mn(2+). 226-232 (HFTTYRK) provides a ligand contact to UDP. The tract at residues 542 to 814 (EKPLDIIQVK…NSQIVARILN (273 aa)) is GT-D domain.

This sequence in the N-terminal section; belongs to the glycosyltransferase 8 family. The protein in the C-terminal section; belongs to the GT-D family.

Its pathway is protein modification; protein glycosylation. Functionally, involved in the polymorphic O-glycosylation of the serine-rich repeat protein PsrP. Catalyzes the third step in glycosylation PsrP in this bacteria. Transfers glucose from UDP-glucose to the terminal glucose moiety of already-glycosylated PsrP (using truncated substrates with PsrP SSR1-GlcNAc-Glc); the C-terminal GT-D domain is sufficient for this reaction in vitro. Also transfers galactose from UDP-galactose to the terminal glucose moiety of already-glycosylated PsrP; the C-terminal GT-D domain is also sufficient for this reaction in vitro. Activity is much higher with UDP-glucose, and the enzyme has a very marked preference for PsrP substrate that has already been modified by GlcNAc and glucose. In vitro has hydrolytic activity against UDP-galactose and to a lesser extent against UDP-glucose. In terms of biological role, also catalyzes the fourth step in glycosylation of PsrP in this bacteria. Can transfer the sugar from both UDP-glucose and UDP-galactose to the terminal sugar moiety of PsrP-GlcNAc-Glc-Glc and PsrP-GlcNAc-Glc-Gal; the C-terminal GT-D domain is also sufficient for this reaction in vitro (using truncated substrates with glycosylated PsrP SSR1). The N-terminal GT-D domain can transfer galactose from UDP-galactose to PsrP-GlcNAc-Glc-Gal or PsrP-GlcNAc-Glc-Glc in the fourth step. The protein is Glycosyltransferase GlyD of Streptococcus pneumoniae serotype 4 (strain ATCC BAA-334 / TIGR4).